Reading from the N-terminus, the 149-residue chain is Probable flagellum biosynthesis repressor protein FlbT (149 aa).

The protein belongs to the FlbT family.

Functionally, has a post-transcriptional repressor function in flagellum biogenesis. Associates with the 5'-UTR of fljK mRNA and promotes its degradation. The polypeptide is Probable flagellum biosynthesis repressor protein FlbT (Rhizobium etli (strain CIAT 652)).